The following is a 188-amino-acid chain: F-box only protein 36 (188 aa).

Positions 91–137 (FDFLERLSDDLLLNIISYLDLEDIARLCQTSHRFAKLCMSDKLWEQI) constitute an F-box domain.

In terms of assembly, directly interacts with SKP1 and CUL1.

Functionally, substrate-recognition component of the SCF (SKP1-CUL1-F-box protein)-type E3 ubiquitin ligase complex. In Pongo abelii (Sumatran orangutan), this protein is F-box only protein 36 (FBXO36).